A 180-amino-acid polypeptide reads, in one-letter code: NAD(P)H-quinone oxidoreductase subunit I, chloroplastic (180 aa).

4Fe-4S ferredoxin-type domains follow at residues 55-84 (GRIHFEFDKCIACEVCVRVCPIDLPVVNWR) and 95-124 (LNYSIDFGICIFCGNCVEYCPTNCLSMTEE). 8 residues coordinate [4Fe-4S] cluster: C64, C67, C70, C74, C104, C107, C110, and C114.

The protein belongs to the complex I 23 kDa subunit family. In terms of assembly, NDH is composed of at least 16 different subunits, 5 of which are encoded in the nucleus. [4Fe-4S] cluster serves as cofactor.

The protein localises to the plastid. It localises to the chloroplast thylakoid membrane. The catalysed reaction is a plastoquinone + NADH + (n+1) H(+)(in) = a plastoquinol + NAD(+) + n H(+)(out). It catalyses the reaction a plastoquinone + NADPH + (n+1) H(+)(in) = a plastoquinol + NADP(+) + n H(+)(out). Functionally, NDH shuttles electrons from NAD(P)H:plastoquinone, via FMN and iron-sulfur (Fe-S) centers, to quinones in the photosynthetic chain and possibly in a chloroplast respiratory chain. The immediate electron acceptor for the enzyme in this species is believed to be plastoquinone. Couples the redox reaction to proton translocation, and thus conserves the redox energy in a proton gradient. The chain is NAD(P)H-quinone oxidoreductase subunit I, chloroplastic from Platanus occidentalis (Sycamore).